We begin with the raw amino-acid sequence, 869 residues long: MPHRAASPAVSENEFDITGALFQNDSDSDNEQPSAKSKRQPPKKAFIAEQQTSANRKASNLKGRTVKKGGGFQAMGLSANLLKAIARKGFSVPTPIQRKTIPVIMDDQDVVGMARTGSGKTAAFVIPMIEKLKSHSTKVGARGLVLSPSRELALQTLKVVKELGRGTDLKSVLLVGGDSLEEQFAMIAGNPDIIIATPGRFLHLKVEMNLDLSSIRYVVFDEADRLFEMGFAAQLTEILHGLPANRQTLLFSATLPKSLVEFARAGLQEPTLVRLDTESKISPDLQNAFFSVKSSEKEGALLYILHEVIKMPTGPTEVSQQRKEEDASAKNLKNKKRKRAEMEKAVNTRESPTKHSTIVFAATKHHVDYLYSLLCEAGFAVSYVYGSLDQTARKIQVQNFRTGMTNILVVTDVAARGIDIPILANVINYDFPSQPKIFVHRVGRTARAGRKGWSYSLVRDADAPYLLDLQLFLGRRLVVGREFGDQVNFAEDVVTGSLPRDGLSQSCEWVTKVLDDNADLAAQRTVAAKGEKLYMRTRNAASLESAKRSKQVVSSDNWTSVHPLFQDETSNLEAEREKMLARIGGYRPPETIFEVNNRRMGKHENVDALDTIKRVRSTLESKKKPFSDEDDDVPTGVADNMSMASDSELEVTFSSYSKSKDNKAKKASAASFQNPEYFMSYTPNNTSLAEDRAYGVHSGTNSNFAQASRSATMDLAGDDGGRGFGEARTLMRWDKRHKKYVARQNDEDGSKGTRLVRGESGAKIAASFRSGRFDAWKRENRLGRLPRVAISGKRFRHRKEQAPKKADPLRGDYEKMKKKAELAKERAMSKAGGAAPRGKSELKSTDDIRIARKLKQKRREKNARPSRKK.

Residues 1–43 (MPHRAASPAVSENEFDITGALFQNDSDSDNEQPSAKSKRQPPK) form a disordered region. The segment covering 21 to 35 (LFQNDSDSDNEQPSA) has biased composition (polar residues). Positions 70-98 (GGFQAMGLSANLLKAIARKGFSVPTPIQR) match the Q motif motif. Positions 101 to 273 (IPVIMDDQDV…RAGLQEPTLV (173 aa)) constitute a Helicase ATP-binding domain. 114-121 (ARTGSGKT) serves as a coordination point for ATP. The short motif at 221–224 (DEAD) is the DEAD box element. 2 disordered regions span residues 315-348 (PTEVSQQRKEEDASAKNLKNKKRKRAEMEKAVNT) and 792-869 (GKRF…SRKK). The Helicase C-terminal domain maps to 341-495 (EMEKAVNTRE…QVNFAEDVVT (155 aa)). Composition is skewed to basic and acidic residues over residues 800–828 (EQAPKKADPLRGDYEKMKKKAELAKERAM) and 838–850 (GKSELKSTDDIRI). Positions 851-869 (ARKLKQKRREKNARPSRKK) are enriched in basic residues.

Belongs to the DEAD box helicase family. DDX54/DBP10 subfamily.

The protein resides in the nucleus. Its subcellular location is the nucleolus. The catalysed reaction is ATP + H2O = ADP + phosphate + H(+). Its function is as follows. ATP-binding RNA helicase involved in the biogenesis of 60S ribosomal subunits and is required for the normal formation of 25S and 5.8S rRNAs. The polypeptide is ATP-dependent RNA helicase dbp10 (dbp10) (Aspergillus fumigatus (strain ATCC MYA-4609 / CBS 101355 / FGSC A1100 / Af293) (Neosartorya fumigata)).